We begin with the raw amino-acid sequence, 140 residues long: MDLALKVKILKMLCKYLTNKNNISLFFNILTNIPNGDDYMFECVQHFIQMKNSNECDINDLFLKLKSQLLVWQDSSFEQFLKIEKEEDNFLESPLEVAEGAIKCKCGSERVFSFSKQTRSGDESTSVFALCSSCKSKWVL.

The segment at glycine 100–valine 139 adopts a TFIIS-type zinc-finger fold. 4 residues coordinate Zn(2+): cysteine 104, cysteine 106, cysteine 131, and cysteine 134.

The protein belongs to the IIV-6 349L family.

This is Putative transcription elongation factor S-II-like protein 349L from Acheta domesticus (House cricket).